A 406-amino-acid polypeptide reads, in one-letter code: Cysteine desulfurase (406 aa).

Lysine 226 carries the N6-(pyridoxal phosphate)lysine modification. The active-site Cysteine persulfide intermediate is the cysteine 364.

This sequence belongs to the class-V pyridoxal-phosphate-dependent aminotransferase family. Csd subfamily. In terms of assembly, homodimer. Interacts with SufE and the SufBCD complex composed of SufB, SufC and SufD. The interaction with SufE is required to mediate the direct transfer of the sulfur atom from the S-sulfanylcysteine. It depends on pyridoxal 5'-phosphate as a cofactor.

The protein resides in the cytoplasm. The catalysed reaction is (sulfur carrier)-H + L-cysteine = (sulfur carrier)-SH + L-alanine. It carries out the reaction L-selenocysteine + AH2 = hydrogenselenide + L-alanine + A + H(+). The protein operates within cofactor biosynthesis; iron-sulfur cluster biosynthesis. Functionally, cysteine desulfurases mobilize the sulfur from L-cysteine to yield L-alanine, an essential step in sulfur metabolism for biosynthesis of a variety of sulfur-containing biomolecules. Component of the suf operon, which is activated and required under specific conditions such as oxidative stress and iron limitation. Acts as a potent selenocysteine lyase in vitro, that mobilizes selenium from L-selenocysteine. Selenocysteine lyase activity is however unsure in vivo. The chain is Cysteine desulfurase from Escherichia fergusonii (strain ATCC 35469 / DSM 13698 / CCUG 18766 / IAM 14443 / JCM 21226 / LMG 7866 / NBRC 102419 / NCTC 12128 / CDC 0568-73).